We begin with the raw amino-acid sequence, 220 residues long: Ribose-5-phosphate isomerase A (220 aa).

Substrate contacts are provided by residues 28 to 31, 81 to 84, and 94 to 97; these read TGST, DGAD, and KGGG. The Proton acceptor role is filled by Glu-103. Lys-121 serves as a coordination point for substrate.

The protein belongs to the ribose 5-phosphate isomerase family. Homodimer.

The catalysed reaction is aldehydo-D-ribose 5-phosphate = D-ribulose 5-phosphate. The protein operates within carbohydrate degradation; pentose phosphate pathway; D-ribose 5-phosphate from D-ribulose 5-phosphate (non-oxidative stage): step 1/1. Its function is as follows. Catalyzes the reversible conversion of ribose-5-phosphate to ribulose 5-phosphate. The chain is Ribose-5-phosphate isomerase A from Shewanella baltica (strain OS223).